A 297-amino-acid polypeptide reads, in one-letter code: Putative heme-binding peroxidase (297 aa).

Residue His-74 is the Proton acceptor of the active site. His-198 contacts heme b. The active-site Tryptophan radical intermediate is the Trp-214.

Belongs to the peroxidase family. Cytochrome c peroxidase subfamily. Heme b serves as cofactor.

Destroys radicals which are normally produced within the cells and which are toxic to biological systems. In Yarrowia lipolytica (strain CLIB 122 / E 150) (Yeast), this protein is Putative heme-binding peroxidase.